A 468-amino-acid polypeptide reads, in one-letter code: Adenosylhomocysteinase (468 aa).

Thr57, Asp132, and Glu194 together coordinate substrate. 195–197 (TTT) is an NAD(+) binding site. 2 residues coordinate substrate: Lys224 and Asp228. NAD(+)-binding positions include Asn229, 258 to 263 (GFGDVG), Glu281, Asn316, 337 to 339 (IGH), and Asn382.

Belongs to the adenosylhomocysteinase family. The cofactor is NAD(+).

It is found in the cytoplasm. The enzyme catalyses S-adenosyl-L-homocysteine + H2O = L-homocysteine + adenosine. Its pathway is amino-acid biosynthesis; L-homocysteine biosynthesis; L-homocysteine from S-adenosyl-L-homocysteine: step 1/1. Functionally, may play a key role in the regulation of the intracellular concentration of adenosylhomocysteine. The polypeptide is Adenosylhomocysteinase (Methylobacterium sp. (strain 4-46)).